The following is a 726-amino-acid chain: WD repeat-containing and planar cell polarity effector protein fritz homolog (726 aa).

WD repeat units lie at residues 305 to 343 (LRSKAISCCKNSTEDKLIVGCEDSSVILYEAHRGVTLLA) and 344 to 383 (QAELMPSLISCHPSGAILLVGSNQGELQVFDIALSPINIQ). Over residues 642–660 (SSGSTPKHTIQQKIPNGPS) the composition is skewed to polar residues. Residues 642–717 (SSGSTPKHTI…RRQDTEDVGS (76 aa)) form a disordered region. Residues 672–685 (MEETEEEEEEEEEA) show a composition bias toward acidic residues. Residues 701-712 (GELREDHRRQDT) are compositionally biased toward basic and acidic residues.

This sequence belongs to the WD repeat fritz family. In terms of assembly, component of the CPLANE (ciliogenesis and planar polarity effectors) complex, composed of INTU, FUZ and WDPCP. Interacts with CPLANE1.

It localises to the cell membrane. The protein localises to the cytoplasm. It is found in the cytoskeleton. The protein resides in the cilium axoneme. Its subcellular location is the cilium basal body. Probable effector of the planar cell polarity signaling pathway which regulates the septin cytoskeleton in both ciliogenesis and collective cell movements. Together with FUZ and WDPCP proposed to function as core component of the CPLANE (ciliogenesis and planar polarity effectors) complex involved in the recruitment of peripheral IFT-A proteins to basal bodies. Binds phosphatidylinositol 3-phosphate with highest affinity, followed by phosphatidylinositol 4-phosphate and phosphatidylinositol 5-phosphate. This Rattus norvegicus (Rat) protein is WD repeat-containing and planar cell polarity effector protein fritz homolog (Wdpcp).